An 878-amino-acid polypeptide reads, in one-letter code: Protein daughter of sevenless (878 aa).

A PH domain is found at 3 to 113 (RTFYEGWLIK…WVNCICQVCH (111 aa)). The segment at 132–176 (ENRTQHTSSSGGLSNSTQNTTTTSLHSSAGTTAPQASVPNAGGSA) is disordered. The span at 136–159 (QHTSSSGGLSNSTQNTTTTSLHSS) shows a compositional bias: low complexity. The segment covering 160-169 (AGTTAPQASV) has biased composition (polar residues). Residues 246–275 (ALIQAQAAAAAAEQLQQQQQQAARLAVSAN) adopt a coiled-coil conformation. Positions 391 to 437 (NNNASKQRSDSDSESVFTDDDEWAHPLPLRENVDRSTRPSDSSIENE) are disordered. S399 carries the phosphoserine modification. T481 is subject to Phosphothreonine. Interaction with DRK regions lie at residues 638-650 (DCPP…KPKV) and 690-702 (GPPS…KPNA). 2 disordered regions span residues 686 to 721 (QQPI…SSGA) and 749 to 773 (LPRQ…RTAS). Composition is skewed to polar residues over residues 707–718 (NSATMSPATRRS) and 760–770 (SPGSMSVQHQR). T771 bears the Phosphothreonine mark. Phosphotyrosine occurs at positions 801 and 854.

In terms of assembly, interacts with DRK. Post-translationally, phosphorylated on Tyr-801 and Tyr-854 in response to sevenless activation, which initiates the recruitment of the phosphatase CSW.

It is found in the cytoplasm. Its subcellular location is the membrane. In terms of biological role, essential component for signaling from various receptor tyrosine kinases such as Sevenless, TORSO and DER. Required for photoreceptor cell and wing development. This Drosophila melanogaster (Fruit fly) protein is Protein daughter of sevenless (dos).